We begin with the raw amino-acid sequence, 388 residues long: MNLHEYQAKSLFAEYGLPVSEGFACDTAQEAVEAAGRIGGNLWVVKCQVHAGGRGKAGGVKVTGDKEEIRAFAEHWLGKNLVTYQTDEKGQPVAKILVESCTDIANELYLGAVVDRATRRVVFMASTEGGVEIEKVAEETPELIHKAIIDPLTGPQPYQARDLGFKLGLNPTQMKQFTKIFMGLATMFVDHDFALLEINPLVITTEGNLHCLDGKIGIDGNALFRQPKIKAMHDPSQDDAREAHAAMFELNYVALDGNVGCMVNGAGLAMGTMDIVNLHGGKPANFLDVGGGATKERVAEAFKIILSDSNVKAVLVNIFGGIVRCDMIAEGIIGAVKEVGVKVPVVVRLEGTNAELGREVLAKSGLDIIAANSLTDAAEQVVKAAEGK.

The ATP-grasp domain occupies 9 to 244 (KSLFAEYGLP…PSQDDAREAH (236 aa)). ATP is bound by residues lysine 46, 53-55 (GRG), glutamate 99, threonine 102, and glutamate 107. 2 residues coordinate Mg(2+): asparagine 199 and aspartate 213. Residues asparagine 264 and 321–323 (GIV) each bind substrate.

Belongs to the succinate/malate CoA ligase beta subunit family. Heterotetramer of two alpha and two beta subunits. It depends on Mg(2+) as a cofactor.

The catalysed reaction is succinate + ATP + CoA = succinyl-CoA + ADP + phosphate. It carries out the reaction GTP + succinate + CoA = succinyl-CoA + GDP + phosphate. The protein operates within carbohydrate metabolism; tricarboxylic acid cycle; succinate from succinyl-CoA (ligase route): step 1/1. In terms of biological role, succinyl-CoA synthetase functions in the citric acid cycle (TCA), coupling the hydrolysis of succinyl-CoA to the synthesis of either ATP or GTP and thus represents the only step of substrate-level phosphorylation in the TCA. The beta subunit provides nucleotide specificity of the enzyme and binds the substrate succinate, while the binding sites for coenzyme A and phosphate are found in the alpha subunit. The chain is Succinate--CoA ligase [ADP-forming] subunit beta from Shewanella sp. (strain MR-4).